We begin with the raw amino-acid sequence, 23 residues long: Acidic phospholipase A2 Ts-A5 (23 aa).

Ca(2+) serves as cofactor. In terms of processing, contains 7 disulfide bonds. In terms of tissue distribution, expressed by the venom gland.

The protein localises to the secreted. The catalysed reaction is a 1,2-diacyl-sn-glycero-3-phosphocholine + H2O = a 1-acyl-sn-glycero-3-phosphocholine + a fatty acid + H(+). Its function is as follows. Snake venom phospholipase A2 (PLA2) that shows a moderate inhibition of ADP-induced human platelet aggregation when tested on platelet rich plasma. Exhibits high hydrolytic activities and prefers the anionic micelles (dPPC with deoxycholate) to the zwitterionic micelles (dPPC with Triton X-100). PLA2 catalyzes the calcium-dependent hydrolysis of the 2-acyl groups in 3-sn-phosphoglycerides. The polypeptide is Acidic phospholipase A2 Ts-A5 (Trimeresurus stejnegeri (Chinese green tree viper)).